The sequence spans 179 residues: Segregation and condensation protein B (179 aa).

This sequence belongs to the ScpB family. As to quaternary structure, homodimer. Homodimerization may be required to stabilize the binding of ScpA to the Smc head domains. Component of a cohesin-like complex composed of ScpA, ScpB and the Smc homodimer, in which ScpA and ScpB bind to the head domain of Smc. The presence of the three proteins is required for the association of the complex with DNA.

Its subcellular location is the cytoplasm. Participates in chromosomal partition during cell division. May act via the formation of a condensin-like complex containing Smc and ScpA that pull DNA away from mid-cell into both cell halves. In Streptococcus equi subsp. equi (strain 4047), this protein is Segregation and condensation protein B.